Consider the following 384-residue polypeptide: S-adenosylmethionine synthase (384 aa).

Residue His-15 coordinates ATP. Residue Asp-17 participates in Mg(2+) binding. Glu-43 contributes to the K(+) binding site. 2 residues coordinate L-methionine: Glu-56 and Gln-99. The interval Gln-99 to Arg-109 is flexible loop. Residues Asp-164–Lys-166, Arg-230–Phe-231, Asp-239, Arg-245–Lys-246, Ala-262, and Lys-266 each bind ATP. Asp-239 lines the L-methionine pocket. Lys-270 is a binding site for L-methionine.

This sequence belongs to the AdoMet synthase family. In terms of assembly, homotetramer; dimer of dimers. Requires Mg(2+) as cofactor. K(+) serves as cofactor.

It localises to the cytoplasm. The enzyme catalyses L-methionine + ATP + H2O = S-adenosyl-L-methionine + phosphate + diphosphate. It functions in the pathway amino-acid biosynthesis; S-adenosyl-L-methionine biosynthesis; S-adenosyl-L-methionine from L-methionine: step 1/1. Functionally, catalyzes the formation of S-adenosylmethionine (AdoMet) from methionine and ATP. The overall synthetic reaction is composed of two sequential steps, AdoMet formation and the subsequent tripolyphosphate hydrolysis which occurs prior to release of AdoMet from the enzyme. The chain is S-adenosylmethionine synthase from Citrobacter koseri (strain ATCC BAA-895 / CDC 4225-83 / SGSC4696).